Reading from the N-terminus, the 508-residue chain is Protection of telomeres protein tpz1 (508 aa).

A pot1-binding region spans residues 2 to 223; it reads SNCLKHPWLE…ENTTHGIYLE (222 aa). Disordered stretches follow at residues 159–178, 235–269, and 282–358; these read QEASLSQQEKPNDNTSNSRD, VSETPEVKQEDNDEDLDAYSWSSSTDSAGEIPSLP, and PPPF…QSHR. A compositionally biased stretch (polar residues) spans 327–347; sequence STEQLNSSLTIERSQSIQSTD. Positions 348–358 are enriched in basic and acidic residues; the sequence is SKQRVETQSHR. Residues 379–508 form a ccq1/poz1-binding region; the sequence is TIDDSTGKLL…KKIEEFRNKS (130 aa).

Interacts with ccq1, pot1 and poz1.

The protein resides in the chromosome. It localises to the telomere. The protein localises to the nucleus. Its function is as follows. Telomeric DNA-binding protein that is required to protect the 3'-end telomeric overhang and involved in telomere length regulation. recruits poz1 and ccq1 to telomeres, regulating telomere length negatively and positively respectively. The sequence is that of Protection of telomeres protein tpz1 (tpz1) from Schizosaccharomyces pombe (strain 972 / ATCC 24843) (Fission yeast).